The primary structure comprises 939 residues: Isoleucine--tRNA ligase (939 aa).

Residues 57–67 carry the 'HIGH' region motif; sequence PYANGHIHLGH. Glu-561 lines the L-isoleucyl-5'-AMP pocket. The 'KMSKS' region motif lies at 602–606; that stretch reads KMSKS. Lys-605 is an ATP binding site. The Zn(2+) site is built by Cys-903, Cys-906, Cys-923, and Cys-926.

The protein belongs to the class-I aminoacyl-tRNA synthetase family. IleS type 1 subfamily. As to quaternary structure, monomer. It depends on Zn(2+) as a cofactor.

It localises to the cytoplasm. It carries out the reaction tRNA(Ile) + L-isoleucine + ATP = L-isoleucyl-tRNA(Ile) + AMP + diphosphate. Catalyzes the attachment of isoleucine to tRNA(Ile). As IleRS can inadvertently accommodate and process structurally similar amino acids such as valine, to avoid such errors it has two additional distinct tRNA(Ile)-dependent editing activities. One activity is designated as 'pretransfer' editing and involves the hydrolysis of activated Val-AMP. The other activity is designated 'posttransfer' editing and involves deacylation of mischarged Val-tRNA(Ile). This chain is Isoleucine--tRNA ligase, found in Desulfotalea psychrophila (strain LSv54 / DSM 12343).